Here is a 336-residue protein sequence, read N- to C-terminus: UPF0324 membrane protein PM1461 (336 aa).

Transmembrane regions (helical) follow at residues Thr5 to Leu23, Leu30 to Tyr52, Gly62 to Leu84, Gly91 to Gly113, Ile123 to Met140, Val153 to Tyr175, Met221 to Leu238, Ile250 to Ile271, Ile275 to Thr297, and Pro310 to Ile332.

It belongs to the UPF0324 family.

It localises to the cell membrane. The sequence is that of UPF0324 membrane protein PM1461 from Pasteurella multocida (strain Pm70).